We begin with the raw amino-acid sequence, 464 residues long: Argininosuccinate lyase (464 aa).

This sequence belongs to the lyase 1 family. Argininosuccinate lyase subfamily.

It localises to the cytoplasm. It catalyses the reaction 2-(N(omega)-L-arginino)succinate = fumarate + L-arginine. The protein operates within amino-acid biosynthesis; L-arginine biosynthesis; L-arginine from L-ornithine and carbamoyl phosphate: step 3/3. The sequence is that of Argininosuccinate lyase from Alcanivorax borkumensis (strain ATCC 700651 / DSM 11573 / NCIMB 13689 / SK2).